Reading from the N-terminus, the 463-residue chain is NADH dehydrogenase [ubiquinone] iron-sulfur protein 2, mitochondrial (463 aa).

A mitochondrion-targeting transit peptide spans Met1–Gly33. Lys62 carries the N6-acetyllysine modification. The residue at position 118 (Arg118) is a Symmetric dimethylarginine. [4Fe-4S] cluster is bound by residues Cys326, Cys332, and Cys347.

It belongs to the complex I 49 kDa subunit family. As to quaternary structure, core subunit of respiratory chain NADH dehydrogenase (Complex I) which is composed of 45 different subunits. Component of the iron-sulfur (IP) fragment of the enzyme. Interacts with NDUFAF3. Interacts with NDUFAF7. Interacts with CERS2. [4Fe-4S] cluster is required as a cofactor. Post-translationally, dimethylation at Arg-118 by NDUFAF7 takes place after NDUFS2 assembles into the complex I, leading to stabilize the early intermediate complex.

Its subcellular location is the mitochondrion inner membrane. The enzyme catalyses a ubiquinone + NADH + 5 H(+)(in) = a ubiquinol + NAD(+) + 4 H(+)(out). Core subunit of the mitochondrial membrane respiratory chain NADH dehydrogenase (Complex I) which catalyzes electron transfer from NADH through the respiratory chain, using ubiquinone as an electron acceptor. Essential for the catalytic activity and assembly of complex I. Redox-sensitive, critical component of the oxygen-sensing pathway in the pulmonary vasculature which plays a key role in acute pulmonary oxygen-sensing and hypoxic pulmonary vasoconstriction. Plays an important role in carotid body sensing of hypoxia. Essential for glia-like neural stem and progenitor cell proliferation, differentiation and subsequent oligodendrocyte or neuronal maturation. This is NADH dehydrogenase [ubiquinone] iron-sulfur protein 2, mitochondrial (NDUFS2) from Pan troglodytes (Chimpanzee).